The primary structure comprises 616 residues: Dihydroxy-acid dehydratase (616 aa).

Asp81 contributes to the Mg(2+) binding site. Position 122 (Cys122) interacts with [2Fe-2S] cluster. Mg(2+) is bound by residues Asp123 and Lys124. Lys124 is modified (N6-carboxylysine). Residue Cys195 participates in [2Fe-2S] cluster binding. Glu491 lines the Mg(2+) pocket. Catalysis depends on Ser517, which acts as the Proton acceptor.

This sequence belongs to the IlvD/Edd family. As to quaternary structure, homodimer. The cofactor is [2Fe-2S] cluster. Requires Mg(2+) as cofactor.

The enzyme catalyses (2R)-2,3-dihydroxy-3-methylbutanoate = 3-methyl-2-oxobutanoate + H2O. It catalyses the reaction (2R,3R)-2,3-dihydroxy-3-methylpentanoate = (S)-3-methyl-2-oxopentanoate + H2O. Its pathway is amino-acid biosynthesis; L-isoleucine biosynthesis; L-isoleucine from 2-oxobutanoate: step 3/4. It participates in amino-acid biosynthesis; L-valine biosynthesis; L-valine from pyruvate: step 3/4. Functionally, functions in the biosynthesis of branched-chain amino acids. Catalyzes the dehydration of (2R,3R)-2,3-dihydroxy-3-methylpentanoate (2,3-dihydroxy-3-methylvalerate) into 2-oxo-3-methylpentanoate (2-oxo-3-methylvalerate) and of (2R)-2,3-dihydroxy-3-methylbutanoate (2,3-dihydroxyisovalerate) into 2-oxo-3-methylbutanoate (2-oxoisovalerate), the penultimate precursor to L-isoleucine and L-valine, respectively. The sequence is that of Dihydroxy-acid dehydratase from Escherichia coli O81 (strain ED1a).